Consider the following 163-residue polypeptide: Cytochrome c-type biogenesis protein CcmE (163 aa).

Over 1 to 8 the chain is Cytoplasmic; the sequence is MNPRRKKR. Residues 9–29 form a helical; Signal-anchor for type II membrane protein membrane-spanning segment; the sequence is LTIILAISAGLAAVIGLVLYA. The Periplasmic portion of the chain corresponds to 30-163; sequence LSQNIDLFYT…TEAQLKGSKQ (134 aa). Heme-binding residues include histidine 131 and tyrosine 135.

The protein belongs to the CcmE/CycJ family.

It localises to the cell inner membrane. Heme chaperone required for the biogenesis of c-type cytochromes. Transiently binds heme delivered by CcmC and transfers the heme to apo-cytochromes in a process facilitated by CcmF and CcmH. This chain is Cytochrome c-type biogenesis protein CcmE, found in Aeromonas hydrophila subsp. hydrophila (strain ATCC 7966 / DSM 30187 / BCRC 13018 / CCUG 14551 / JCM 1027 / KCTC 2358 / NCIMB 9240 / NCTC 8049).